A 440-amino-acid polypeptide reads, in one-letter code: Peroxisome proliferator-activated receptor delta (440 aa).

The tract at residues 1–53 (MEQPQEETPEAREEEKEEVAMGDGAPELNGGPEHTLPSSSCADLSQNSSPSSL) is disordered. The span at 36–53 (LPSSSCADLSQNSSPSSL) shows a compositional bias: polar residues. The segment at residues 70-144 (NMECRVCGDK…LGMSHNAIRF (75 aa)) is a DNA-binding region (nuclear receptor). 2 consecutive NR C4-type zinc fingers follow at residues 73 to 93 (CRVC…CEGC) and 110 to 132 (CDRI…FQKC). In terms of domain architecture, NR LBD spans 210–438 (FVIHDIETLW…HPLLQEIYKD (229 aa)).

Belongs to the nuclear hormone receptor family. NR1 subfamily. As to quaternary structure, heterodimer with the retinoid X receptor. Interacts (via domain NR LBD) with CRY1 and CRY2 in a ligand-dependent manner. 'Lys-48'-linked polyubiquitinated; leading to proteasomal degradation. Deubiquitinated and stabilized by OTUD3. As to expression, heart, adrenal and intestine.

Its subcellular location is the nucleus. In terms of biological role, ligand-activated transcription factor key mediator of energy metabolism in adipose tissues. Receptor that binds peroxisome proliferators such as hypolipidemic drugs and fatty acids. Has a preference for poly-unsaturated fatty acids, such as gamma-linoleic acid and eicosapentanoic acid. Once activated by a ligand, the receptor binds to promoter elements of target genes. Regulates the peroxisomal beta-oxidation pathway of fatty acids. Functions as transcription activator for the acyl-CoA oxidase gene. Decreases expression of NPC1L1 once activated by a ligand. The polypeptide is Peroxisome proliferator-activated receptor delta (Ppard) (Mus musculus (Mouse)).